Here is a 103-residue protein sequence, read N- to C-terminus: c-Myc-binding protein (103 aa).

The protein belongs to the AMY1 family. As to quaternary structure, binds via its C-terminal region to the N-terminal region of MYC. Associates with AKAP1/S-AKAP84. Interacts with MYCBPAP. Interacts with CFAP91. Highly expressed in heart, placenta, pancreas, skeletal muscle and kidney. Also present at low levels in lung.

The protein resides in the cytoplasm. It localises to the nucleus. It is found in the mitochondrion. Functionally, may control the transcriptional activity of MYC. Stimulates the activation of E box-dependent transcription by MYC. This Homo sapiens (Human) protein is c-Myc-binding protein.